A 311-amino-acid polypeptide reads, in one-letter code: MKKKIGLLVMAYGTPYKEEDIERYYTHIRRGRKPSPEMLEDLTERYRAIGGISPLATITLEQAKKLEKRLNEVQDEVEYHMYLGLKHIEPFIEDAVKEMHNDGIQDAIALVLAPHYSTFSVKSYVGRAQEEAEKLGNLTIHGIDSWYKEPKFIQYWVDAVKSIYSGMSDAEREKAVLIVSAHSLPEKIIAMGDPYPDQLNETADYIARGAEVANYAVGWQSAGNTPDPWIGPDVQDLTRELNEKYGYTSFVYAPVGFVAEHLEVLYDNDFECKVVTDEIGAKYYRPEMPNASDAFIDCLTDVVVKKKESVM.

Residues Tyr-12, Arg-29, 45–46 (RY), Ser-53, and Tyr-124 each bind Fe-coproporphyrin III. Residues His-182 and Glu-263 each coordinate Fe(2+).

This sequence belongs to the ferrochelatase family.

The protein resides in the cytoplasm. The catalysed reaction is Fe-coproporphyrin III + 2 H(+) = coproporphyrin III + Fe(2+). The protein operates within porphyrin-containing compound metabolism; protoheme biosynthesis. Functionally, involved in coproporphyrin-dependent heme b biosynthesis. Catalyzes the insertion of ferrous iron into coproporphyrin III to form Fe-coproporphyrin III. The chain is Coproporphyrin III ferrochelatase 1 from Bacillus anthracis.